The sequence spans 140 residues: Nucleoside diphosphate kinase (140 aa).

ATP-binding residues include Lys11, Phe59, Arg87, Thr93, Arg104, and Asn114. His117 acts as the Pros-phosphohistidine intermediate in catalysis.

Belongs to the NDK family. Homotetramer. Requires Mg(2+) as cofactor.

The protein resides in the cytoplasm. The enzyme catalyses a 2'-deoxyribonucleoside 5'-diphosphate + ATP = a 2'-deoxyribonucleoside 5'-triphosphate + ADP. The catalysed reaction is a ribonucleoside 5'-diphosphate + ATP = a ribonucleoside 5'-triphosphate + ADP. Functionally, major role in the synthesis of nucleoside triphosphates other than ATP. The ATP gamma phosphate is transferred to the NDP beta phosphate via a ping-pong mechanism, using a phosphorylated active-site intermediate. The sequence is that of Nucleoside diphosphate kinase from Methylobacterium sp. (strain 4-46).